The sequence spans 525 residues: GMP synthase [glutamine-hydrolyzing] (525 aa).

The Glutamine amidotransferase type-1 domain maps to 8-207; it reads KILILDFGSQ…ALDICGCDAN (200 aa). Residue C85 is the Nucleophile of the active site. Catalysis depends on residues H181 and E183. Residues 208–400 enclose the GMPS ATP-PPase domain; it reads WKPSSIIEDA…LGLPYDMLYR (193 aa). An ATP-binding site is contributed by 235–241; it reads SGGVDSS.

Homodimer.

The enzyme catalyses XMP + L-glutamine + ATP + H2O = GMP + L-glutamate + AMP + diphosphate + 2 H(+). The protein operates within purine metabolism; GMP biosynthesis; GMP from XMP (L-Gln route): step 1/1. Functionally, catalyzes the synthesis of GMP from XMP. The protein is GMP synthase [glutamine-hydrolyzing] of Shewanella piezotolerans (strain WP3 / JCM 13877).